Consider the following 193-residue polypeptide: Gas vesicle protein C (193 aa).

5 repeats span residues 19 to 51, 52 to 84, 85 to 117, 118 to 150, and 151 to 183; these read VAEL…LQAF, YKDL…LLAF, HKEL…LLAF, YQEV…LLAF, and HKEL…LLKF. A 5 X 33 AA tandem repeats region spans residues 19–183; sequence VAELSLETRE…KEQKESLLKF (165 aa).

The protein belongs to the gas vesicle GvpC family.

Its subcellular location is the gas vesicle. Its function is as follows. Confers stability, involved in shaping gas vesicles (GV), hollow, gas-filled proteinaceous nanostructures. During planktonic growth they allow positioning of the organism at a favorable depth for light or nutrient acquisition. The ratio of GvpA:GvpC is estimated to be 25:1. GvpC strengthens the GV wall, probably by connecting several GvpA proteins in the same and/or adjacent ribs. Removal of GvpC by SDS reduces the critical collapse pressure (CCP) of stored gas vesicles from 0.23 Mpa to 0.08 MPa. Removal of GvpC by urea reduces CCP of freshly isolated GVs from 0.550 MPa to 0.190 MPa; addition of recombinant GvpC restores CCP to 0.508 MPa. As the turgor pressure in this species is usually 0.35 MPa (plus the water column pressure in its growth environment), this protein is essential for GV formation. The polypeptide is Gas vesicle protein C (Dolichospermum flosaquae (Anabaena flos-aquae)).